Here is a 481-residue protein sequence, read N- to C-terminus: Bifunctional protein GlmU (481 aa).

Residues 1-235 form a pyrophosphorylase region; the sequence is MTHKERPLDV…PDEVMGANDR (235 aa). UDP-N-acetyl-alpha-D-glucosamine-binding positions include 13–16, lysine 27, glutamine 78, 83–84, 107–109, glycine 146, glutamate 161, asparagine 176, and asparagine 233; these read LAAG, GT, and YGD. A Mg(2+)-binding site is contributed by aspartate 109. Asparagine 233 contacts Mg(2+). The tract at residues 236-256 is linker; the sequence is VQLAQAAAVLRRRINTAHMQA. Positions 257–481 are N-acetyltransferase; it reads GVTLQDPSTI…PWLAGWLERQ (225 aa). Arginine 339 and lysine 357 together coordinate UDP-N-acetyl-alpha-D-glucosamine. Residue histidine 369 is the Proton acceptor of the active site. Residues tyrosine 372 and asparagine 383 each contribute to the UDP-N-acetyl-alpha-D-glucosamine site. Residues alanine 386, serine 411, alanine 429, and arginine 446 each coordinate acetyl-CoA.

The protein in the N-terminal section; belongs to the N-acetylglucosamine-1-phosphate uridyltransferase family. It in the C-terminal section; belongs to the transferase hexapeptide repeat family. Homotrimer. Requires Mg(2+) as cofactor.

The protein localises to the cytoplasm. It catalyses the reaction alpha-D-glucosamine 1-phosphate + acetyl-CoA = N-acetyl-alpha-D-glucosamine 1-phosphate + CoA + H(+). The catalysed reaction is N-acetyl-alpha-D-glucosamine 1-phosphate + UTP + H(+) = UDP-N-acetyl-alpha-D-glucosamine + diphosphate. The protein operates within nucleotide-sugar biosynthesis; UDP-N-acetyl-alpha-D-glucosamine biosynthesis; N-acetyl-alpha-D-glucosamine 1-phosphate from alpha-D-glucosamine 6-phosphate (route II): step 2/2. It functions in the pathway nucleotide-sugar biosynthesis; UDP-N-acetyl-alpha-D-glucosamine biosynthesis; UDP-N-acetyl-alpha-D-glucosamine from N-acetyl-alpha-D-glucosamine 1-phosphate: step 1/1. It participates in bacterial outer membrane biogenesis; LPS lipid A biosynthesis. In terms of biological role, catalyzes the last two sequential reactions in the de novo biosynthetic pathway for UDP-N-acetylglucosamine (UDP-GlcNAc). The C-terminal domain catalyzes the transfer of acetyl group from acetyl coenzyme A to glucosamine-1-phosphate (GlcN-1-P) to produce N-acetylglucosamine-1-phosphate (GlcNAc-1-P), which is converted into UDP-GlcNAc by the transfer of uridine 5-monophosphate (from uridine 5-triphosphate), a reaction catalyzed by the N-terminal domain. The polypeptide is Bifunctional protein GlmU (Deinococcus geothermalis (strain DSM 11300 / CIP 105573 / AG-3a)).